The chain runs to 1164 residues: Auxin response factor 7 (1164 aa).

The TF-B3 DNA-binding region spans 127–229; sequence FCKTLTASDT…QLLLGIRRAN (103 aa). Disordered regions lie at residues 451 to 505, 536 to 555, 570 to 728, 765 to 858, and 903 to 930; these read HNNL…QQQL, QQLQ…QQQQ, HQQP…LLQQ, FLSP…SSSG, and KSKA…GENN. Positions 464–489 are enriched in polar residues; the sequence is LSFQTPHGGISSSNLQFNKQNQQAPM. Over residues 570 to 635 the composition is skewed to low complexity; sequence HQQPLQQQTQ…SQQASTHHLQ (66 aa). The segment covering 637-651 has biased composition (polar residues); the sequence is QLVSGSMASSVITPP. Residues 652-671 show a composition bias toward low complexity; that stretch reads SSSLNQSFQQQQQQSKQLQQ. Polar residues predominate over residues 678-710; the sequence is ASTSQSSVIETSKSSSNLMSAPPQETQFSRQVE. 2 stretches are compositionally biased toward low complexity: residues 711–728 and 765–790; these read QQQP…LLQQ and FLSP…TLSQ. Residues 791-808 are compositionally biased toward polar residues; the sequence is GHQFPSSCTNNGLSTLQP. Low complexity predominate over residues 841-851; the sequence is PSSSTSPSTNN. Over residues 903-921 the composition is skewed to polar residues; it reads KSKASLTDHQLEASASGTS. One can recognise a PB1 domain in the interval 1037-1130; that stretch reads RTYTKVQKRG…EVQQMSLDGN (94 aa). The disordered stretch occupies residues 1145 to 1164; sequence DSGNAWRGHYDDNSATSFNR.

It belongs to the ARF family. In terms of assembly, homodimers and heterodimers. Interacts with the auxin-responsive proteins IAA1 and IAA12 (BODENLOS). Interacts (via PB1 domain) with IAA17 (via PB1 domain). Interacts with IAA19. Interacts with ARF5. Binds to JMJ30. Binds to ATXR2 in the nucleus. Expressed in the whole plant.

It localises to the nucleus. Its function is as follows. Auxin response factors (ARFs) are transcriptional factors that bind specifically to the DNA sequence 5'-TGTCTC-3' found in the auxin-responsive promoter elements (AuxREs). Acts as a transcriptional activator of several tropic stimulus-induced (TSI) genes, including SAUR50. Formation of heterodimers with Aux/IAA proteins may alter their ability to modulate early auxin response genes expression. Required for differential growth responses of aerial tissues. Involved in ethylene responses. Regulates lateral root formation through direct regulation of LBD16 and/or LBD29. Functionally redundant with ARF19. Mediates embryo axis formation and vascular tissues differentiation. Functionally redundant with ARF5. Involved in cellular dedifferentiation during callus formation on callus-inducing medium (CIM) and in an ATXR2-dependent manner. This is Auxin response factor 7 from Arabidopsis thaliana (Mouse-ear cress).